The primary structure comprises 494 residues: Solute carrier family 2, facilitated glucose transporter member 3 (494 aa).

Residues 1-10 (MGTTKVTPYL) are Cytoplasmic-facing. Residues 11 to 32 (IFATSVAAIGSFQFGYNTGVIN) form a helical membrane-spanning segment. At 33 to 64 (APEMIIRDFLNYTLDEKLDEPPSRLLLTNLWS) the chain is on the extracellular side. Asparagine 43 is a glycosylation site (N-linked (GlcNAc...) asparagine). A helical membrane pass occupies residues 65-84 (LSVAIFSVGGMIGSFSVGLF). The Cytoplasmic segment spans residues 85–89 (NRFGR). A helical membrane pass occupies residues 90 to 110 (RNSMLIVNLLAVIGGCLMGFC). At 111-117 (KISESVE) the chain is on the extracellular side. A helical membrane pass occupies residues 118 to 141 (MLILGRLVIGVFCGLCTGFVPMYI). Topologically, residues 142 to 152 (GEISPTALRGA) are cytoplasmic. A helical transmembrane segment spans residues 153–173 (FGTLNQLGIVIGILVAQIFGL). Position 158 (glutamine 158) interacts with D-glucose. The Extracellular portion of the chain corresponds to 174–182 (EIILGSEVL). The chain crosses the membrane as a helical span at residues 183 to 203 (WPVLLGFTIIPAILQSAALPF). At 204-268 (CPESPRFLLI…LFRAPSYRQP (65 aa)) the chain is on the cytoplasmic side. Residue threonine 231 is modified to Phosphothreonine. A helical membrane pass occupies residues 269 to 289 (IIISIVLQLSQQLSGINAVFY). The segment at 276–278 (QLS) is important for selectivity against fructose. D-glucose contacts are provided by residues 279 to 280 (QQ) and asparagine 285. The Extracellular segment spans residues 290-303 (YSTGIFKDAGVKEP). Residues 304-324 (IYATIGAGVVNTIFTIVSVFL) form a helical membrane-spanning segment. Asparagine 314 contributes to the D-glucose binding site. The Cytoplasmic portion of the chain corresponds to 325–330 (VERAGR). The helical transmembrane segment at 331–351 (RTLHLIGLGGMALCSVLMTVS) threads the bilayer. At 352 to 362 (LLLKDKYDTMS) the chain is on the extracellular side. A helical transmembrane segment spans residues 363-388 (LVCIAAILIYVAFFEIGPGPIPWFIV). 2 residues coordinate D-glucose: glutamate 377 and tryptophan 385. Residues 389 to 398 (AELFSQGPRP) lie on the Cytoplasmic side of the membrane. Residues 399 to 419 (AAMAVAGCSNWTSNFLVGLLF) traverse the membrane as a helical segment. Residues 420 to 428 (PSAAYYLGA) lie on the Extracellular side of the membrane. Residues 429 to 449 (YVFVIFAVFLVAFFIFTFFKV) traverse the membrane as a helical segment. The Cytoplasmic segment spans residues 450-494 (PETRGRTFEDITRAFEGQAAEANKLGKGPTMEMNSIQPIETTTHV). Serine 484 carries the phosphoserine modification. Residue threonine 491 is modified to Phosphothreonine.

The protein belongs to the major facilitator superfamily. Sugar transporter (TC 2.A.1.1) family. Glucose transporter subfamily. In terms of assembly, interacts with SMIM43; the interaction may promote SLC2A3-mediated glucose transport to meet the energy needs of mesendoderm differentiation. In terms of tissue distribution, detected in stomach, placenta, lung and brain.

It is found in the cell membrane. It localises to the perikaryon. The protein resides in the cell projection. It catalyses the reaction D-glucose(out) = D-glucose(in). It carries out the reaction D-galactose(in) = D-galactose(out). Deoxyglucose transport is inhibited by D-glucose, D-galactose and maltose. Galactose transport is inhibited by D-glucose and maltose. Facilitative glucose transporter. Can also mediate the uptake of various other monosaccharides across the cell membrane. Mediates the uptake of glucose, 2-deoxyglucose, galactose, mannose, xylose and fucose, and probably also dehydroascorbate. Does not mediate fructose transport. Required for mesendoderm differentiation. This is Solute carrier family 2, facilitated glucose transporter member 3 from Oryctolagus cuniculus (Rabbit).